We begin with the raw amino-acid sequence, 656 residues long: Methionine--tRNA ligase (656 aa).

Positions 11-21 (YYVNDIPHIGH) match the 'HIGH' region motif. Zn(2+) contacts are provided by Cys-126, Cys-129, Cys-147, and Cys-150. The short motif at 301–305 (KMSKS) is the 'KMSKS' region element. Residue Lys-304 participates in ATP binding. The region spanning 555–656 (DFKKVEIKVG…REKIAGSLIS (102 aa)) is the tRNA-binding domain.

The protein belongs to the class-I aminoacyl-tRNA synthetase family. MetG type 2A subfamily. As to quaternary structure, homodimer. It depends on Zn(2+) as a cofactor.

It is found in the cytoplasm. The enzyme catalyses tRNA(Met) + L-methionine + ATP = L-methionyl-tRNA(Met) + AMP + diphosphate. In terms of biological role, is required not only for elongation of protein synthesis but also for the initiation of all mRNA translation through initiator tRNA(fMet) aminoacylation. This chain is Methionine--tRNA ligase (metG), found in Helicobacter pylori (strain J99 / ATCC 700824) (Campylobacter pylori J99).